The sequence spans 289 residues: RING-H2 finger protein ATL30 (289 aa).

Residues 26–46 (VIILTVILLVVFFIGFFAIYF) form a helical membrane-spanning segment. The RING-type; atypical zinc-finger motif lies at 114-157 (CAICLLEFEEEHILLRLLTTCYHVFHQECIDQWLESNKTCPVCR). The segment at 181-206 (HENRDQEQTSTSNEVMLSRQSSGNNE) is disordered. The segment covering 188-204 (QTSTSNEVMLSRQSSGN) has biased composition (polar residues).

The protein belongs to the RING-type zinc finger family. ATL subfamily.

The protein resides in the membrane. It carries out the reaction S-ubiquitinyl-[E2 ubiquitin-conjugating enzyme]-L-cysteine + [acceptor protein]-L-lysine = [E2 ubiquitin-conjugating enzyme]-L-cysteine + N(6)-ubiquitinyl-[acceptor protein]-L-lysine.. It functions in the pathway protein modification; protein ubiquitination. In Arabidopsis thaliana (Mouse-ear cress), this protein is RING-H2 finger protein ATL30 (ATL30).